A 118-amino-acid chain; its full sequence is Galanin peptides (118 aa).

A signal peptide spans 1–19; that stretch reads MHRCVGGVCVSLIVCAFLT. The propeptide occupies 20-30; sequence ETLGMVIAAKE. Ala-61 bears the Alanine amide mark.

Belongs to the galanin family. As to expression, strongly expressed in brain and stomach, moderately in the eye, and very weakly in heart, kidney and gills. Not detected in liver.

It localises to the secreted. Endocrine hormone of the central and peripheral nervous systems that binds and activates the G protein-coupled receptors GALR1 (galr1a and galr1b) and GALR2 (galr2a and galr2b). This small neuropeptide may regulate diverse physiologic functions including contraction of smooth muscle of the gastrointestinal and genitourinary tract, growth hormone and insulin release and adrenal secretion. The chain is Galanin peptides from Danio rerio (Zebrafish).